The primary structure comprises 514 residues: Alpha-1B adrenergic receptor (514 aa).

Over 1–45 (MNPDLDTGHNTSAPAHWGELKDANFTGPNQTSSNSTLPQLDVTRA) the chain is Extracellular. N-linked (GlcNAc...) asparagine glycosylation is found at asparagine 10, asparagine 24, asparagine 29, and asparagine 34. Residues 46-69 (ISVGCLGAFILFAIVGNILVILSV) traverse the membrane as a helical segment. The Cytoplasmic portion of the chain corresponds to 70–82 (ACNRHLRTPTNYF). Residues 83 to 104 (IVNLAIADLLLSFTDLPFSATL) traverse the membrane as a helical segment. At 105–114 (EVLGYWVLGR) the chain is on the extracellular side. Residues 115 to 140 (IFCDIWAAVDVLCCTASILSLCAISI) traverse the membrane as a helical segment. Cysteines 117 and 194 form a disulfide. Residues 141-160 (DRYIGVRYSLQYPTLVTRRK) lie on the Cytoplasmic side of the membrane. A helical membrane pass occupies residues 161-183 (AILALLSVWVLSTVISIGPLLGW). The Extracellular portion of the chain corresponds to 184–200 (KEPAPNDDKECGVTEEP). The helical transmembrane segment at 201-223 (FYALFSSLGSFYIPLAVILVMYC) threads the bilayer. The Cytoplasmic segment spans residues 224–294 (RVYIVAKRTT…FSREKKAAKT (71 aa)). Position 263 is a phosphothreonine (threonine 263). Residues 295 to 318 (LGIVVGMFILCWLPFFIALPLGSL) traverse the membrane as a helical segment. Residues 319–325 (FSTLKPP) lie on the Extracellular side of the membrane. A helical transmembrane segment spans residues 326-350 (DAVFKVVFWLGYFNSCLNPIIYPCS). Over 351–514 (SKEFKRAFMR…SNMPLAPGHF (164 aa)) the chain is Cytoplasmic. Cysteine 364 carries S-palmitoyl cysteine lipidation. The Nuclear localization signal motif lies at 367-377 (RGGRRRRRRRR). Disordered stretches follow at residues 391–429 (GGSL…GYLG) and 473–514 (LGEP…PGHF). Positions 409–423 (SCMSGSQRTLPSASP) are enriched in polar residues.

It belongs to the G-protein coupled receptor 1 family. Adrenergic receptor subfamily. ADRA1B sub-subfamily. As to quaternary structure, homo- and heterooligomer. Heterooligomerizes with ADRA1B homooligomers in cardiac myocytes. Interacts with CAVIN4.

It is found in the nucleus membrane. It localises to the cell membrane. The protein resides in the cytoplasm. Its subcellular location is the membrane. The protein localises to the caveola. In terms of biological role, this alpha-adrenergic receptor mediates its action by association with G proteins that activate a phosphatidylinositol-calcium second messenger system. Its effect is mediated by G(q) and G(11) proteins. Nuclear ADRA1A-ADRA1B heterooligomers regulate phenylephrine (PE)-stimulated ERK signaling in cardiac myocytes. This chain is Alpha-1B adrenergic receptor (Adra1b), found in Mus musculus (Mouse).